A 796-amino-acid chain; its full sequence is MTESVELMNKYGEPLRYDRNFTGPRQRDRSCTDVPCLLLFVLFLGGWAFIAQYAIRNGDLNKLLVPTDSFNRKCGMDSGVLNKKNLFFFDLNQCIDPLVPITGCDTPQVCVETCPRETFVWDTMKDKQSFAELHSRLICLSEEHKAQIRTKSDIQDAINQNQCARWYIKSAPFLKRCLFEFSQGVCDYIPSFLLNGGRSRRELHMLPGNATTEVQMQADVMYQKMTDAQALVVPQANGKQTPVDEEPIIQCKRRLNEAVIKEKMMQTDTRLAKLVGNMVAHFYNGTNDAQLLGEKIVEDLVNSWSIVLVACFCTLVASLIYIALMRWLSAPILWFSIFGVLIGLLVGIYFSVKQYIHWENTPTVPVHGLNLHSTVKNVLQNQNTWLYLSIFVGVCFVVILLLVIVLRKRIRIAIALTKEGSKAVSSVISTVFFPIFSWILFIAAIAFAIGVGLYLGSIGDPSFRMVRQLTKSGEVTTEDCVCEGPAINYTVGGSCKPEVFQQYCSVRLTSFFQNRNPCLNTTCSFDSINNPIEIKWAIFYNVFGFLWLSFFISAFSYMVLASTFARWYWTFKKRDVPYFTLTRAFFQTAVYHLGTVAFGSLILAIVRLIRLVLEYIHEKLKKYDNAVTRAILCCMRCFFWLLETFLKFLNRNAYIMCAIHGKNFCSSAADSFNLIMRNFLRVVTLDQVTDFLFFLSKLLLTAGAGASTYYFLDNNPSIIRLNYIAVPTTVVVIAAFLITSVFFGVYSTAVDTLFLCFLEDCERNDGSPEKPFFMSKQLMKILGKKNNLPPRQRRGK.

The N-linked (GlcNAc...) asparagine glycan is linked to Asn20. A helical transmembrane segment spans residues 35 to 55 (PCLLLFVLFLGGWAFIAQYAI). 2 N-linked (GlcNAc...) asparagine glycosylation sites follow: Asn209 and Asn284. A run of 4 helical transmembrane segments spans residues 304–324 (WSIVLVACFCTLVASLIYIAL), 332–352 (ILWFSIFGVLIGLLVGIYFSV), 386–406 (LYLSIFVGVCFVVILLLVIVL), and 431–451 (VFFPIFSWILFIAAIAFAIGV). Residues Asn488 and Asn520 are each glycosylated (N-linked (GlcNAc...) asparagine). 5 consecutive transmembrane segments (helical) span residues 542-562 (VFGFLWLSFFISAFSYMVLAS), 585-605 (FFQTAVYHLGTVAFGSLILAI), 626-648 (AVTRAILCCMRCFFWLLETFLKF), 691-711 (FLFFLSKLLLTAGAGASTYYF), and 724-744 (IAVPTTVVVIAAFLITSVFFG).

Belongs to the CTL (choline transporter-like) family.

It is found in the membrane. The protein is Choline transporter-like 2 of Drosophila melanogaster (Fruit fly).